We begin with the raw amino-acid sequence, 78 residues long: MVKLRLKRCGRKQRAVYRIVAIDVRSRREGRDLRKVGFYDPIKNQSCLNVPAILYFLEKGAQPTGTVRDILKKAEVFK.

The protein belongs to the bacterial ribosomal protein bS16 family.

It localises to the plastid. It is found in the chloroplast. This is Small ribosomal subunit protein bS16c from Panax ginseng (Korean ginseng).